An 881-amino-acid chain; its full sequence is Valine--tRNA ligase (881 aa).

A 'HIGH' region motif is present at residues 49–59; that stretch reads PNVTGKLHLGH. Residues 526–530 carry the 'KMSKS' region motif; the sequence is KMSKS. Position 529 (Lys529) interacts with ATP. Residues 810 to 881 adopt a coiled-coil conformation; it reads LADLINLDEE…VRQRLADLEK (72 aa).

The protein belongs to the class-I aminoacyl-tRNA synthetase family. ValS type 1 subfamily. In terms of assembly, monomer.

The protein resides in the cytoplasm. It catalyses the reaction tRNA(Val) + L-valine + ATP = L-valyl-tRNA(Val) + AMP + diphosphate. Catalyzes the attachment of valine to tRNA(Val). As ValRS can inadvertently accommodate and process structurally similar amino acids such as threonine, to avoid such errors, it has a 'posttransfer' editing activity that hydrolyzes mischarged Thr-tRNA(Val) in a tRNA-dependent manner. The chain is Valine--tRNA ligase from Bacillus cereus (strain ATCC 14579 / DSM 31 / CCUG 7414 / JCM 2152 / NBRC 15305 / NCIMB 9373 / NCTC 2599 / NRRL B-3711).